The primary structure comprises 876 residues: MSGEESMPDEEQKQSEEEEEMIRKRTLAMRKKVEEIMRNGAGLVRESNGLPKAGADYELYNSYPTFNTFMKRSEQRLNALMNKVTKSIGCAMRVPDVGSSVEHYTECVIEAQDNIAERAATLHEALKKAELDEIVKVPEFITKAAPTNRKTEAEVSAAMRTFSANIGTVLAEKFRERREEAAQMVVLEKPQKTYNISSDNSQAPFSSKLTVKHHAIEKRTGIVLHDDDESGRRDWISAETETEEEHPYIAEILHFKVPEAQLKSAECLKFTALKDTPLTMIDTKEKLEALTKTLNSVKEFAVDLEHHQMRSYLGLTCLIQISTRDEDFIIDPFPIWDHVGMLNEPFANPRILKVFHGSDSDVLWLQRDYGVHVVNLFDTYVAMKKLKYPKFSLAYLTLRFADVVLDKQYQLADWRARPLRNAMINYAREDTHYLLYSYDMLREQLLKQDTKDLANVYSESSDLCIKVYKKPVFNPKGYLTEIKFRFTLNTRQDYALTHLFKWRDVVARAEDESPHFVLPNHMMLSLSETLPRDVGGIYACCNPLPYFVKQRTGDILKIIVEARDVKLEKVGLSAKERNDAQEARGVMNDTMDHITSVLKSKIDFSHTRFDEERGEIYIDKTDEGMDIELKDHKESLLSVLQTAEIPSVETMIVVEKGKKSDNQKVKKLLNELDKFVTPFECYQMMMITKEKQEEEERKEAERKKLEEGDLPKTMFSHHDAPINRKPEFDAKLLNVDTLKLVPDDPNKPKDPEPSPMEESSSEPQIFDPSRFTDDQLLSKKAMKRKRDAARRNIDVSVVLGESSSSSDPKKKKSDDDAPVEDFDYEKADSSAFEKPVRDNNADFDPFHQKYRLKNKTKKNMAMKKSSNRQGTINYKK.

A disordered region spans residues 1-22 (MSGEESMPDEEQKQSEEEEEMI). Positions 279–445 (TMIDTKEKLE…YSYDMLREQL (167 aa)) constitute a 3'-5' exonuclease domain. Residues Asp-303, Glu-305, Asp-361, and Asp-430 each contribute to the Mg(2+) site. An HRDC domain is found at 489–569 (NTRQDYALTH…VEARDVKLEK (81 aa)). 3 stretches are compositionally biased toward basic and acidic residues: residues 690-730 (EKQE…EFDA), 741-752 (VPDDPNKPKDPE), and 834-847 (KPVR…DPFH). Residues 690–876 (EKQEEEERKE…NRQGTINYKK (187 aa)) form a disordered region. Basic residues predominate over residues 848–861 (QKYRLKNKTKKNMA).

It belongs to the exosome component 10/RRP6 family. As to quaternary structure, component of the RNA exosome complex. Interacts with crn-5. Requires Mg(2+) as cofactor. In terms of tissue distribution, ubiquitously expressed.

Its subcellular location is the nucleus. The protein resides in the nucleolus. It is found in the nucleoplasm. Its function is as follows. Catalytic component of the RNA exosome complex which has 3'-&gt;5' exoribonuclease activity and participates in a multitude of cellular RNA processing and degradation events. Involved in apoptotic DNA degradation. Involved in regulation of antisense ribosomal siRNA production. Involved in response to cold-warm shock. This Caenorhabditis elegans protein is Exosome complex component 10 homolog.